The sequence spans 81 residues: ATP synthase subunit c (81 aa).

The next 2 helical transmembrane spans lie at 6-26 and 57-77; these read AAAS…GPGI and LAFM…LLFA.

Belongs to the ATPase C chain family. As to quaternary structure, F-type ATPases have 2 components, F(1) - the catalytic core - and F(0) - the membrane proton channel. F(1) has five subunits: alpha(3), beta(3), gamma(1), delta(1), epsilon(1). F(0) has four main subunits: a(1), b(1), b'(1) and c(10-14). The alpha and beta chains form an alternating ring which encloses part of the gamma chain. F(1) is attached to F(0) by a central stalk formed by the gamma and epsilon chains, while a peripheral stalk is formed by the delta, b and b' chains.

The protein localises to the cellular thylakoid membrane. F(1)F(0) ATP synthase produces ATP from ADP in the presence of a proton or sodium gradient. F-type ATPases consist of two structural domains, F(1) containing the extramembraneous catalytic core and F(0) containing the membrane proton channel, linked together by a central stalk and a peripheral stalk. During catalysis, ATP synthesis in the catalytic domain of F(1) is coupled via a rotary mechanism of the central stalk subunits to proton translocation. Its function is as follows. Key component of the F(0) channel; it plays a direct role in translocation across the membrane. A homomeric c-ring of between 10-14 subunits forms the central stalk rotor element with the F(1) delta and epsilon subunits. The polypeptide is ATP synthase subunit c (Picosynechococcus sp. (strain ATCC 27264 / PCC 7002 / PR-6) (Agmenellum quadruplicatum)).